Reading from the N-terminus, the 253-residue chain is 5'-nucleotidase SurE (253 aa).

Residues aspartate 8, aspartate 9, serine 39, and asparagine 97 each coordinate a divalent metal cation.

Belongs to the SurE nucleotidase family. The cofactor is a divalent metal cation.

The protein localises to the cytoplasm. The enzyme catalyses a ribonucleoside 5'-phosphate + H2O = a ribonucleoside + phosphate. Functionally, nucleotidase that shows phosphatase activity on nucleoside 5'-monophosphates. The polypeptide is 5'-nucleotidase SurE (Aeromonas hydrophila subsp. hydrophila (strain ATCC 7966 / DSM 30187 / BCRC 13018 / CCUG 14551 / JCM 1027 / KCTC 2358 / NCIMB 9240 / NCTC 8049)).